The chain runs to 123 residues: uncharacterized protein (123 aa).

The segment at 76-97 (ENNKRKKKSEGERVRSPRTFRG) is disordered.

This is an uncharacterized protein from Saccharomyces cerevisiae (strain ATCC 204508 / S288c) (Baker's yeast).